The chain runs to 440 residues: Proline--tRNA ligase (440 aa).

Belongs to the class-II aminoacyl-tRNA synthetase family. ProS type 2 subfamily. As to quaternary structure, homodimer.

It localises to the cytoplasm. The enzyme catalyses tRNA(Pro) + L-proline + ATP = L-prolyl-tRNA(Pro) + AMP + diphosphate. Functionally, catalyzes the attachment of proline to tRNA(Pro) in a two-step reaction: proline is first activated by ATP to form Pro-AMP and then transferred to the acceptor end of tRNA(Pro). The polypeptide is Proline--tRNA ligase (Rhizobium etli (strain ATCC 51251 / DSM 11541 / JCM 21823 / NBRC 15573 / CFN 42)).